The primary structure comprises 312 residues: MPSGQPVFPRRVPDAYIAMRGLVVASLLILLVGGTDAFRICAFNAHRLTLTKVIKESVMDTLVQILARCDIMVLQEVVDSSQNTVLFLLQKLQSSKSYSFLNSSLLGRSTYKEKYVYIYRSDKTQVLNFYQYNDTEDIFAREPFVAQFTLPSKILPSVVLVPLHTTPKDVEKELNALYDVFLDVSQRWQNENVILLGDFNADCASLAKKRLNSLLLRTKAGFHWVIPDGEDTTVRASTNCTYDRIVMHGQGCQKLLKAAATFDFPRRFQLTEEEALRVSDHYPVEVELNKAAQGIPPHCLSTLLLLSLSQLG.

Positions 1–35 (MPSGQPVFPRRVPDAYIAMRGLVVASLLILLVGGT) are cleaved as a signal peptide. N-linked (GlcNAc...) asparagine glycosylation occurs at Asn102. Residue Glu113 is part of the active site. The N-linked (GlcNAc...) asparagine glycan is linked to Asn133. His164 is a catalytic residue. Residues Cys203 and Cys240 are joined by a disulfide bond. Asn239 carries N-linked (GlcNAc...) asparagine glycosylation.

The protein belongs to the DNase I family.

Its subcellular location is the endoplasmic reticulum. This Rattus norvegicus (Rat) protein is Deoxyribonuclease-1-like 1 (Dnase1l1).